The primary structure comprises 200 residues: Glycerol-3-phosphate acyltransferase (200 aa).

The next 5 membrane-spanning stretches (helical) occupy residues 1–21 (MLLSSLLLLALGYLLGSMPNG), 53–73 (GPALVVFLLDVGKGALAVLLA), 81–101 (WVQVLAGLAALAGHIWPVWLG), 114–134 (MFLGLAWPVGLACLGLFMAVI), and 139–159 (IVSLSSVVAAIGLPVLMLTSG).

The protein belongs to the PlsY family. As to quaternary structure, probably interacts with PlsX.

The protein resides in the cell inner membrane. It carries out the reaction an acyl phosphate + sn-glycerol 3-phosphate = a 1-acyl-sn-glycero-3-phosphate + phosphate. The protein operates within lipid metabolism; phospholipid metabolism. In terms of biological role, catalyzes the transfer of an acyl group from acyl-phosphate (acyl-PO(4)) to glycerol-3-phosphate (G3P) to form lysophosphatidic acid (LPA). This enzyme utilizes acyl-phosphate as fatty acyl donor, but not acyl-CoA or acyl-ACP. In Synechococcus sp. (strain CC9902), this protein is Glycerol-3-phosphate acyltransferase.